The primary structure comprises 80 residues: Putative membrane protein insertion efficiency factor (80 aa).

The segment at 61 to 80 (KTGKDPIPDHFSLKRNQEGE) is disordered. Residues 62–80 (TGKDPIPDHFSLKRNQEGE) are compositionally biased toward basic and acidic residues.

It belongs to the UPF0161 family.

The protein resides in the cell membrane. In terms of biological role, could be involved in insertion of integral membrane proteins into the membrane. This chain is Putative membrane protein insertion efficiency factor, found in Streptococcus pneumoniae (strain CGSP14).